The chain runs to 394 residues: Elongation factor Tu (394 aa).

In terms of domain architecture, tr-type G spans 10 to 204 (KPHVNVGTIG…ALDTYIPEPE (195 aa)). The interval 19-26 (GHVDHGKT) is G1. 19 to 26 (GHVDHGKT) contacts GTP. Thr-26 is a Mg(2+) binding site. The segment at 60-64 (GITIN) is G2. The segment at 81–84 (DCPG) is G3. Residues 81 to 85 (DCPGH) and 136 to 139 (NKCD) contribute to the GTP site. Residues 136–139 (NKCD) form a G4 region. Residues 174–176 (SAL) are G5.

Belongs to the TRAFAC class translation factor GTPase superfamily. Classic translation factor GTPase family. EF-Tu/EF-1A subfamily. As to quaternary structure, monomer.

It is found in the cytoplasm. It carries out the reaction GTP + H2O = GDP + phosphate + H(+). Functionally, GTP hydrolase that promotes the GTP-dependent binding of aminoacyl-tRNA to the A-site of ribosomes during protein biosynthesis. This chain is Elongation factor Tu, found in Shewanella sediminis (strain HAW-EB3).